We begin with the raw amino-acid sequence, 165 residues long: Deoxyuridine 5'-triphosphate nucleotidohydrolase (165 aa).

Substrate contacts are provided by residues 66-68 (RSG), Asn-79, 83-85 (TVD), and Lys-93. The interval 134–165 (ETSRGAGGHGSSGGHASLTPGARSAARVAQEG) is disordered.

This sequence belongs to the dUTPase family. Requires Mg(2+) as cofactor.

It carries out the reaction dUTP + H2O = dUMP + diphosphate + H(+). Its pathway is pyrimidine metabolism; dUMP biosynthesis; dUMP from dCTP (dUTP route): step 2/2. This enzyme is involved in nucleotide metabolism: it produces dUMP, the immediate precursor of thymidine nucleotides and it decreases the intracellular concentration of dUTP so that uracil cannot be incorporated into DNA. The sequence is that of Deoxyuridine 5'-triphosphate nucleotidohydrolase from Nocardia farcinica (strain IFM 10152).